We begin with the raw amino-acid sequence, 287 residues long: Myogenin (287 aa).

Serine 77 and serine 79 each carry phosphoserine; by CaMK2G. Residues 81-132 form the bHLH domain; that stretch reads DRRRAATLREKRRLKKVNEAFEALKRSTLLNPNQRLPKVEILRSAIQYIERL. Threonine 87 carries the post-translational modification Phosphothreonine; by CaMK2G.

In terms of assembly, homodimer and heterodimer with E12; heterodimerization enhances MYOG DNA-binding and transcriptional activities. Interacts with SMARCA4/BRG1/BAF190A. Interacts (via C-terminal region) with SSRP1 and SUPT16H; the interaction is indicative of an interaction with the FACT complex. Interacts with CSRP3. Post-translationally, phosphorylated by CAMK2G on threonine and serine amino acids in a muscle activity-dependent manner. Phosphorylation of Thr-87 impairs both DNA-binding and trans-activation functions in contracting muscles. In terms of tissue distribution, expressed in muscle (at protein level).

Its subcellular location is the nucleus. Its function is as follows. Acts as a transcriptional activator that promotes transcription of muscle-specific target genes and plays a role in muscle differentiation, cell cycle exit and muscle atrophy. Essential for the development of functional embryonic skeletal fiber muscle differentiation. However is dispensable for postnatal skeletal muscle growth; phosphorylation by CAMK2G inhibits its transcriptional activity in respons to muscle activity. Required for the recruitment of the FACT complex to muscle-specific promoter regions, thus promoting gene expression initiation. During terminal myoblast differentiation, plays a role as a strong activator of transcription at loci with an open chromatin structure previously initiated by MYOD1. Together with MYF5 and MYOD1, co-occupies muscle-specific gene promoter core regions during myogenesis. Also cooperates with myocyte-specific enhancer factor MEF2D and BRG1-dependent recruitment of SWI/SNF chromatin-remodeling enzymes to alter chromatin structure at myogenic late gene promoters. Facilitates cell cycle exit during terminal muscle differentiation through the up-regulation of miR-20a expression, which in turn represses genes involved in cell cycle progression. Binds to the E-box containing (E1) promoter region of the miR-20a gene. Also plays a role in preventing reversal of muscle cell differentiation. Contributes to the atrophy-related gene expression in adult denervated muscles. Induces fibroblasts to differentiate into myoblasts. This is Myogenin (Myog) from Rattus norvegicus (Rat).